The sequence spans 82 residues: Putative membrane protein insertion efficiency factor (82 aa).

A disordered region spans residues Gly63–His82.

This sequence belongs to the UPF0161 family.

It is found in the cell membrane. Its function is as follows. Could be involved in insertion of integral membrane proteins into the membrane. This is Putative membrane protein insertion efficiency factor from Staphylococcus epidermidis (strain ATCC 35984 / DSM 28319 / BCRC 17069 / CCUG 31568 / BM 3577 / RP62A).